The following is a 296-amino-acid chain: tRNA dimethylallyltransferase (296 aa).

9–16 contacts ATP; that stretch reads GTTASGKS. A substrate-binding site is contributed by 11-16; the sequence is TASGKS. Residues 34–37 are interaction with substrate tRNA; the sequence is DSLA.

It belongs to the IPP transferase family. As to quaternary structure, monomer. Requires Mg(2+) as cofactor.

The catalysed reaction is adenosine(37) in tRNA + dimethylallyl diphosphate = N(6)-dimethylallyladenosine(37) in tRNA + diphosphate. In terms of biological role, catalyzes the transfer of a dimethylallyl group onto the adenine at position 37 in tRNAs that read codons beginning with uridine, leading to the formation of N6-(dimethylallyl)adenosine (i(6)A). The chain is tRNA dimethylallyltransferase from Campylobacter curvus (strain 525.92).